The following is a 263-amino-acid chain: Chymotrypsinogen B (263 aa).

The N-terminal stretch at 1 to 18 (MAFLWLVSCFALVGATFG) is a signal peptide. 5 cysteine pairs are disulfide-bonded: cysteine 19/cysteine 140, cysteine 60/cysteine 76, cysteine 154/cysteine 219, cysteine 186/cysteine 200, and cysteine 209/cysteine 238. The Peptidase S1 domain maps to 34–261 (IVNGEDAIPG…LMPWVQEILE (228 aa)). Histidine 75 acts as the Charge relay system in catalysis. Serine 93 carries the phosphoserine modification. Catalysis depends on aspartate 120, which acts as the Charge relay system. The active-site Charge relay system is the serine 213.

It belongs to the peptidase S1 family.

It localises to the secreted. Its subcellular location is the extracellular space. It catalyses the reaction Preferential cleavage: Tyr-|-Xaa, Trp-|-Xaa, Phe-|-Xaa, Leu-|-Xaa.. The sequence is that of Chymotrypsinogen B (Ctrb1) from Mus musculus (Mouse).